Here is a 313-residue protein sequence, read N- to C-terminus: Protein FixB (313 aa).

L255–D283 contributes to the FAD binding site.

Belongs to the ETF alpha-subunit/FixB family. In terms of assembly, heterodimer of FixA and FixB.

It participates in amine and polyamine metabolism; carnitine metabolism. In terms of biological role, required for anaerobic carnitine reduction. May bring reductant to CaiA. The protein is Protein FixB of Escherichia coli (strain 55989 / EAEC).